Reading from the N-terminus, the 1603-residue chain is MDEASCRFPEWVSSKIIDYYAEQNIKALFDWQIDVLNEARQFEDQHLIFSAPTSAGKSIVAELLSWKVASTGRKVLFVLPYISVAREKLHQIQRCWRRDDISVCGFIGPQASNPNEWLGAVCTIEKAASLTNRALSEDWFEEIGMIVVDEMHMVFDSSRGAHIEHMLSKVLLWNQSALEKVRIIGMSATIPELYRIGKWLDGAKVFEARFRPIVLQNHIVIGSELRKSGDNKVLREFSEDPLILLTEESFRRNSQTLVMISSKLDAEKTALNIASRFHEINKTDSSLLEILKERANGLLFIKHGLERNGCKDRNVMSTLAWGVAYHHAGLTMEERECIELGFREKNIVILVATSTLASGVNLPAERVLIKAQPRGPSALTSLNYRQMVGRAGRTGHATRGETYLLIKKCDRDAVLKIIETPIDQGVLTRKRDAERTNLSRFILEGICTGLTTTRSQIHDLCKLLLFNSENLQLSDIAIEMLLRNSFISQDENDDQLSPTQLGRAAIASSLPPEASLAIFEDLNSASRAIALDTELHMLYLVTPINVSVWQECDWHHLFSIFSKLPSDHKRIAKLVGVSEKFILDQLQGRRNDKLLQIHIRFFSALALFDLISEMSIYEVSHKYRIPRGCLQTLQSQSATYAAMIVAFCLRLGWTYLKALLDGFATRLLFGVRSELSELVAIEGIDGQRARILHERGVTCLSHLSACDSSKLAHFLTLAVPYSSSNSNDGLGEWLFGEPRMRVDVAARTLKERARKVLIRRVQELGISVELPKFEENEENIQESCDSGLPDSCEGMEDELEEKENIVKMEEMTKSVTEMSLTDNTISFKSEDDLFKKEIKVEEDEVFIKKEIDEDEEEIVEETVIECLETSLLKLKASTDEVFLRRLSQTFSPIGRSRSILNNSLLEDSFDRPVPRSSIPILNFITPKRESPTPYFEDSFDRPIPGSLPISSSRRKSVLTNIANLDSSRRESINSNASDNNSFDVFVTPPTKSAKEEKRRIAVKHPRVGNIIYSPLTSSPVIKHPKLEINHFYLKDVCHDHNAWNLWTKSSTSTSSCSIRVSDDYTGIAIRTDAGNTFIPLLETFGGEPSPASKYFESFSKCIIPLNTRLEFLKTLAVTVEMYISSMEDAFLIFEKFGIKIFRLKVVRIAAYLNNVIDVEQEENSNFLPILMDRYSILDPEIRKTCSSSLHKAAVEVYSLKPIFEKMCCSGASLQLEMESCQTVLNIFYSGIVFDQALCNSFIYKIRKQIENLEENIWRLAYGKFNIHSSNEVANVLFYRLGLIYPETSGCKPKLRHLPTNKLILEQMNTQHPIVGKILEYRQIQHTLTQCLMPLAKFIGRIHCWFEMCTSTGRILTSVPNLQNVPKRISSDGMSARQLFIANSENLLIGADYKQLELRVLAHLSNDSNLVNLITSDRDLFEELSIQWNFPRDAVKQLCYGLIYGMGAKSLSELTRMSIEDAEKMLKAFFAMFPGVRSYINETKEKVCKEEPISTIIGRRTIIKASGIGEERARIERVAVNYTIQGSASEIFKTAIVDIESKIKEFGAQIVLTIHDEVLVECPEIHVAAASESIENCMQNALSHLLRVPMRVSMKTGRSWADLK.

One can recognise a Helicase ATP-binding domain in the interval 38-208; the sequence is EARQFEDQHL…WLDGAKVFEA (171 aa). Position 51–58 (51–58) interacts with ATP; the sequence is APTSAGKS. The DEAH box signature appears at 149–152; sequence DEMH. Positions 283-434 constitute a Helicase C-terminal domain; the sequence is TDSSLLEILK…GVLTRKRDAE (152 aa).

This sequence belongs to the DNA polymerase type-A family.

Its subcellular location is the nucleus. The catalysed reaction is DNA(n) + a 2'-deoxyribonucleoside 5'-triphosphate = DNA(n+1) + diphosphate. Functionally, DNA polymerase that promotes microhomology-mediated end-joining (MMEJ), an alternative non-homologous end-joining (NHEJ) machinery triggered in response to double-strand breaks in DNA. MMEJ is an error-prone repair pathway that produces deletions of sequences from the strand being repaired and promotes genomic rearrangements, such as telomere fusions. Required to prevent extensive loss of sequences near G-quadruplex (G4) DNA sites, which are prone to cause genome alterations, by generating deletions. This Caenorhabditis elegans protein is DNA polymerase theta.